The sequence spans 510 residues: Sphingolipid C9-methyltransferase B (510 aa).

The N-linked (GlcNAc...) asparagine glycan is linked to asparagine 55. 2 helical membrane passes run 62–82 (LLGG…GGGA) and 84–104 (TFVF…WTYA). N-linked (GlcNAc...) asparagine glycosylation is present at asparagine 175. S-adenosyl-L-methionine-binding positions include 227–228 (YT), 264–272 (MLDIGCGWG), 290–295 (TIAENQ), and 320–321 (YR). Asparagine 294 is a glycosylation site (N-linked (GlcNAc...) asparagine).

The protein belongs to the CFA/CMAS family.

The protein localises to the membrane. It catalyses the reaction a (4E,8E)-4-sphinga-4,8-dienine ceramide + S-adenosyl-L-methionine = a 9-methyl-(4E,8E)-sphinga-4,8-dienine ceramide + S-adenosyl-L-homocysteine + H(+). It functions in the pathway lipid metabolism; sphingolipid metabolism. In terms of biological role, catalyzes methylation of the sphingoid base component of glucosylceramides (GluCers) at the C9-position. Sphingolipid C9-methylation requires 4,8-desaturated ceramides as substrates. Glucosylceramides play important roles in growth, differentiation and pathogenicity. The methyl group at the C9-position distinguishes fungal glucosylceramides from those of plants and animals and may thus play a role in host-pathogen interactions enabling the host to recognize the fungal attack and initiate specific defense responses. This chain is Sphingolipid C9-methyltransferase B, found in Emericella nidulans (strain FGSC A4 / ATCC 38163 / CBS 112.46 / NRRL 194 / M139) (Aspergillus nidulans).